Here is a 485-residue protein sequence, read N- to C-terminus: Glutamyl-tRNA(Gln) amidotransferase subunit A (485 aa).

Residues Lys-79 and Ser-154 each act as charge relay system in the active site. The active-site Acyl-ester intermediate is Ser-178.

The protein belongs to the amidase family. GatA subfamily. As to quaternary structure, heterotrimer of A, B and C subunits.

It carries out the reaction L-glutamyl-tRNA(Gln) + L-glutamine + ATP + H2O = L-glutaminyl-tRNA(Gln) + L-glutamate + ADP + phosphate + H(+). In terms of biological role, allows the formation of correctly charged Gln-tRNA(Gln) through the transamidation of misacylated Glu-tRNA(Gln) in organisms which lack glutaminyl-tRNA synthetase. The reaction takes place in the presence of glutamine and ATP through an activated gamma-phospho-Glu-tRNA(Gln). The protein is Glutamyl-tRNA(Gln) amidotransferase subunit A of Staphylococcus aureus (strain bovine RF122 / ET3-1).